A 256-amino-acid polypeptide reads, in one-letter code: NAP1-related protein 1 (256 aa).

A coiled-coil region spans residues Ile23–Lys64. The interval Leu220–Glu256 is disordered. Residues Asp226–Glu256 are compositionally biased toward acidic residues.

The protein belongs to the nucleosome assembly protein (NAP) family. Can form homomeric and heteromeric protein complexes with NRP2. Binds histones H2A and H2B and associates with chromatin in vivo. In terms of tissue distribution, ubiquitous.

It is found in the cytoplasm. The protein localises to the nucleus. Its function is as follows. Acts as a histone H2A/H2B chaperone in nucleosome assembly, playing a critical role for the correct expression of genes involved in root proliferation and patterning. Required with NRP2 for the maintenance of cell proliferation and differentiation in postembryonic root growth. Involved in both intramolecular and intermolecular somatic homologous recombination. This Arabidopsis thaliana (Mouse-ear cress) protein is NAP1-related protein 1 (NRP1).